The sequence spans 351 residues: Dihydroorotate dehydrogenase (quinone) (351 aa).

Residues 61 to 65 and Thr85 contribute to the FMN site; that span reads AGLDK. Substrate is bound at residue Lys65. 110–114 contacts substrate; that stretch reads NRMGF. Residues Asn139 and Asn172 each coordinate FMN. Asn172 is a binding site for substrate. Ser175 (nucleophile) is an active-site residue. Asn177 contacts substrate. FMN contacts are provided by Lys217 and Thr245. Residue 246–247 participates in substrate binding; the sequence is NT. Residues Gly268, Gly297, and 318–319 contribute to the FMN site; that span reads YT.

The protein belongs to the dihydroorotate dehydrogenase family. Type 2 subfamily. As to quaternary structure, monomer. FMN serves as cofactor.

The protein resides in the cell membrane. The enzyme catalyses (S)-dihydroorotate + a quinone = orotate + a quinol. Its pathway is pyrimidine metabolism; UMP biosynthesis via de novo pathway; orotate from (S)-dihydroorotate (quinone route): step 1/1. In terms of biological role, catalyzes the conversion of dihydroorotate to orotate with quinone as electron acceptor. This Xylella fastidiosa (strain M12) protein is Dihydroorotate dehydrogenase (quinone).